Reading from the N-terminus, the 170-residue chain is MALLLSDWCPDGDADTHTGTDPGRTTHRLCARERGVRGTQPCPRIYLRLPAQNCEETRFCCASPGSVVLGHGAPRTASPPSALSHPSPLEGLSFSPFPPSVLSHPSPPEGLSFSLFHCLCSGKLSESPGCFWNSLGWSFSVLTEPGVWKVGEAIWVAENLAQPLTSPCAC.

This is an uncharacterized protein from Homo sapiens (Human).